Reading from the N-terminus, the 158-residue chain is NADPH-dependent 7-cyano-7-deazaguanine reductase (158 aa).

Cys-56 serves as the catalytic Thioimide intermediate. Asp-63 serves as the catalytic Proton donor. Substrate is bound by residues 78–80 (LES) and 97–98 (HE).

It belongs to the GTP cyclohydrolase I family. QueF type 1 subfamily.

It is found in the cytoplasm. The enzyme catalyses 7-aminomethyl-7-carbaguanine + 2 NADP(+) = 7-cyano-7-deazaguanine + 2 NADPH + 3 H(+). It participates in tRNA modification; tRNA-queuosine biosynthesis. Its function is as follows. Catalyzes the NADPH-dependent reduction of 7-cyano-7-deazaguanine (preQ0) to 7-aminomethyl-7-deazaguanine (preQ1). This chain is NADPH-dependent 7-cyano-7-deazaguanine reductase, found in Nitrobacter winogradskyi (strain ATCC 25391 / DSM 10237 / CIP 104748 / NCIMB 11846 / Nb-255).